We begin with the raw amino-acid sequence, 106 residues long: uncharacterized protein (106 aa).

This is an uncharacterized protein from Pyrococcus woesei.